The chain runs to 285 residues: 4-hydroxybenzoate octaprenyltransferase (285 aa).

Transmembrane regions (helical) follow at residues 19 to 39 (IGSLLLLWPTLWALFLAADGL), 42 to 62 (WHVLIVFVLGVVFMRSAGCVI), 82 to 102 (LPSGLISSKEALSLFAVLVVC), 104 to 124 (FLLVLTMNTLTIMLSGIGIVL), 136 to 156 (YLPQFVLGLAFSWAIPMAYAA), 166 to 186 (WLLFVINALWTIAYDTQYAMV), 210 to 230 (IIGLLQLSVLALLIVLGSQLA), 233 to 253 (GIYYWGILAAAGFFVYQQWLI), and 265 to 285 (FLNNNYVGGLIFIAISASVLI).

This sequence belongs to the UbiA prenyltransferase family. Requires Mg(2+) as cofactor.

The protein resides in the cell inner membrane. The enzyme catalyses all-trans-octaprenyl diphosphate + 4-hydroxybenzoate = 4-hydroxy-3-(all-trans-octaprenyl)benzoate + diphosphate. Its pathway is cofactor biosynthesis; ubiquinone biosynthesis. In terms of biological role, catalyzes the prenylation of para-hydroxybenzoate (PHB) with an all-trans polyprenyl group. Mediates the second step in the final reaction sequence of ubiquinone-8 (UQ-8) biosynthesis, which is the condensation of the polyisoprenoid side chain with PHB, generating the first membrane-bound Q intermediate 3-octaprenyl-4-hydroxybenzoate. This chain is 4-hydroxybenzoate octaprenyltransferase, found in Aliivibrio fischeri (strain ATCC 700601 / ES114) (Vibrio fischeri).